The sequence spans 358 residues: 3-isopropylmalate dehydrogenase 2 (358 aa).

74–87 (GPKWDKLPAESRPE) contacts NAD(+). Substrate-binding residues include R94, R104, R132, and D221. The Mg(2+) site is built by D221, D245, and D249. An NAD(+)-binding site is contributed by 279-291 (GSAPDIAGQGVAN).

It belongs to the isocitrate and isopropylmalate dehydrogenases family. LeuB type 1 subfamily. As to quaternary structure, homodimer. Requires Mg(2+) as cofactor. It depends on Mn(2+) as a cofactor.

It is found in the cytoplasm. It carries out the reaction (2R,3S)-3-isopropylmalate + NAD(+) = 4-methyl-2-oxopentanoate + CO2 + NADH. It participates in amino-acid biosynthesis; L-leucine biosynthesis; L-leucine from 3-methyl-2-oxobutanoate: step 3/4. Functionally, catalyzes the oxidation of 3-carboxy-2-hydroxy-4-methylpentanoate (3-isopropylmalate) to 3-carboxy-4-methyl-2-oxopentanoate. The product decarboxylates to 4-methyl-2 oxopentanoate. This is 3-isopropylmalate dehydrogenase 2 from Dechloromonas aromatica (strain RCB).